The sequence spans 313 residues: Protein FixB (313 aa).

255–283 (LYLAVGISGQIQHMVGANGAQTIFAINKD) contributes to the FAD binding site.

The protein belongs to the ETF alpha-subunit/FixB family. As to quaternary structure, heterodimer of FixA and FixB.

It participates in amine and polyamine metabolism; carnitine metabolism. In terms of biological role, required for anaerobic carnitine reduction. May bring reductant to CaiA. In Salmonella agona (strain SL483), this protein is Protein FixB.